The primary structure comprises 194 residues: Peptidyl-tRNA hydrolase (194 aa).

Tyrosine 16 is a tRNA binding site. Catalysis depends on histidine 21, which acts as the Proton acceptor. Positions 67, 69, and 115 each coordinate tRNA.

Belongs to the PTH family. In terms of assembly, monomer.

It localises to the cytoplasm. It carries out the reaction an N-acyl-L-alpha-aminoacyl-tRNA + H2O = an N-acyl-L-amino acid + a tRNA + H(+). Its function is as follows. Hydrolyzes ribosome-free peptidyl-tRNAs (with 1 or more amino acids incorporated), which drop off the ribosome during protein synthesis, or as a result of ribosome stalling. Catalyzes the release of premature peptidyl moieties from peptidyl-tRNA molecules trapped in stalled 50S ribosomal subunits, and thus maintains levels of free tRNAs and 50S ribosomes. The sequence is that of Peptidyl-tRNA hydrolase from Citrobacter koseri (strain ATCC BAA-895 / CDC 4225-83 / SGSC4696).